Consider the following 431-residue polypeptide: Serine/threonine-protein kinase SSN3 (431 aa).

In terms of domain architecture, Protein kinase spans 27–355; it reads YQIIGYIAAG…ADNALVHPYF (329 aa). ATP is bound by residues 33 to 41 and Lys59; that span reads IAAGTYGKV. Asp174 serves as the catalytic Proton acceptor. A disordered region spans residues 397–431; sequence RHGGAYDDQHNNSNNNTNNSLNANNANNVPRKRAR. Low complexity predominate over residues 407–424; that stretch reads NNSNNNTNNSLNANNANN.

Belongs to the protein kinase superfamily. CMGC Ser/Thr protein kinase family. CDC2/CDKX subfamily. As to quaternary structure, component of the srb8-11 complex, a regulatory module of the Mediator complex. It depends on Mg(2+) as a cofactor.

Its subcellular location is the nucleus. It catalyses the reaction L-seryl-[protein] + ATP = O-phospho-L-seryl-[protein] + ADP + H(+). It carries out the reaction L-threonyl-[protein] + ATP = O-phospho-L-threonyl-[protein] + ADP + H(+). The enzyme catalyses [DNA-directed RNA polymerase] + ATP = phospho-[DNA-directed RNA polymerase] + ADP + H(+). In terms of biological role, component of the srb8-11 complex. The srb8-11 complex is a regulatory module of the Mediator complex which is itself dependent transcription. The srb8-11 complex may be involved in the transcriptional repression of a subset of genes regulated by Mediator. It may inhibit the association of the Mediator complex with RNA polymerase II to form the holoenzyme complex. The srb8-11 complex phosphorylates the C-terminal domain (CTD) of the largest subunit of RNA polymerase II. This Scheffersomyces stipitis (strain ATCC 58785 / CBS 6054 / NBRC 10063 / NRRL Y-11545) (Yeast) protein is Serine/threonine-protein kinase SSN3 (SSN3).